The sequence spans 21 residues: Bradykinin-potentiating peptide K12 (21 aa).

The tract at residues 1-21 (LRDYANRVINGGPVEAAGPPA) is disordered.

As to expression, expressed by the venom gland.

It is found in the secreted. Its function is as follows. Inhibits angiotensin-converting enzyme (ACE), but does not serve as substrate for the enzyme. Potentiate bradykinin (BK) on the isolated guinea pig ileum as well as the isolated rat uterus for contraction. Also potentiates in vivo the depressor effect of BK on arterial blood pressure in the normotensive anesthetized rat. Intracerebroventricular injection into mice does not show toxic activity. This is Bradykinin-potentiating peptide K12 from Buthus occitanus (Common European scorpion).